We begin with the raw amino-acid sequence, 711 residues long: RB-associated KRAB zinc finger protein (711 aa).

The KRAB domain occupies 8-79 (LSFKDVAVAF…EGDRHAQRHL (72 aa)). Residues Lys97 and Lys256 each participate in a glycyl lysine isopeptide (Lys-Gly) (interchain with G-Cter in SUMO2) cross-link. Residues 170 to 257 (AYGESLEDFN…YPRSQMELKP (88 aa)) are required for interaction with RB1. 2 consecutive C2H2-type zinc fingers follow at residues 258 to 280 (FECT…QRAH) and 286 to 308 (YACS…RRSH). A Glycyl lysine isopeptide (Lys-Gly) (interchain with G-Cter in SUMO2) cross-link involves residue Lys312. 6 C2H2-type zinc fingers span residues 314–336 (YKCN…QRTH), 342–364 (YECS…QRNH), 370–392 (YPCN…QRTH), 398–420 (YKCN…QRTH), 426–448 (YQCS…YRSH), and 454–476 (YECT…WKVH). Lys354 participates in a covalent cross-link: Glycyl lysine isopeptide (Lys-Gly) (interchain with G-Cter in SUMO2). The interaction with AR stretch occupies residues 414–711 (ITHQRTHTGE…TVNVLTVEKL (298 aa)). Residues 508-530 (YECNECGKTFLDSSAFHRHQSVP) form a C2H2-type 9; degenerate zinc finger. A Glycyl lysine isopeptide (Lys-Gly) (interchain with G-Cter in SUMO2) cross-link involves residue Lys534. 6 consecutive C2H2-type zinc fingers follow at residues 536-558 (YECN…YRGH), 564-586 (FGCS…QRVH), 592-614 (YECY…HRIH), 620-642 (YECS…YRSH), 648-670 (YECN…YRTH), and 676-698 (YECN…QRIH).

The protein belongs to the krueppel C2H2-type zinc-finger protein family. Interacts with AR. May also interact with other nuclear hormone receptors such as NR3C1/GR. Interacts with RB1.

The protein resides in the nucleus. Its function is as follows. May repress E2F-dependent transcription. May promote AR-dependent transcription. The protein is RB-associated KRAB zinc finger protein (Rbak) of Mus musculus (Mouse).